A 320-amino-acid polypeptide reads, in one-letter code: Acetaldehyde dehydrogenase 2 (320 aa).

C129 serves as the catalytic Acyl-thioester intermediate. NAD(+) is bound by residues 160–168 and N287; that span reads SAGPGTRAN.

The protein belongs to the acetaldehyde dehydrogenase family.

It catalyses the reaction acetaldehyde + NAD(+) + CoA = acetyl-CoA + NADH + H(+). This Burkholderia cenocepacia (strain ATCC BAA-245 / DSM 16553 / LMG 16656 / NCTC 13227 / J2315 / CF5610) (Burkholderia cepacia (strain J2315)) protein is Acetaldehyde dehydrogenase 2.